The following is a 420-amino-acid chain: Glucose-1-phosphate adenylyltransferase (420 aa).

Residues Tyr107, Gly173, 188-189 (EK), and Ser206 each bind alpha-D-glucose 1-phosphate.

The protein belongs to the bacterial/plant glucose-1-phosphate adenylyltransferase family. Homotetramer.

It catalyses the reaction alpha-D-glucose 1-phosphate + ATP + H(+) = ADP-alpha-D-glucose + diphosphate. The protein operates within glycan biosynthesis; glycogen biosynthesis. Functionally, involved in the biosynthesis of ADP-glucose, a building block required for the elongation reactions to produce glycogen. Catalyzes the reaction between ATP and alpha-D-glucose 1-phosphate (G1P) to produce pyrophosphate and ADP-Glc. This is Glucose-1-phosphate adenylyltransferase from Shewanella frigidimarina (strain NCIMB 400).